Here is a 140-residue protein sequence, read N- to C-terminus: uncharacterized protein (140 aa).

This is an uncharacterized protein from Escherichia coli (strain K12).